The sequence spans 282 residues: Probable septum site-determining protein MinC (282 aa).

A disordered region spans residues 103 to 147 (SQSRRGGKDEAPKEKAGKPEATAASGQTDAEAAGNTGKGKDSEGA). A compositionally biased stretch (basic and acidic residues) spans 104 to 120 (QSRRGGKDEAPKEKAGK).

It belongs to the MinC family. Interacts with MinD and FtsZ.

In terms of biological role, cell division inhibitor that blocks the formation of polar Z ring septums. Rapidly oscillates between the poles of the cell to destabilize FtsZ filaments that have formed before they mature into polar Z rings. Prevents FtsZ polymerization. In Cupriavidus metallidurans (strain ATCC 43123 / DSM 2839 / NBRC 102507 / CH34) (Ralstonia metallidurans), this protein is Probable septum site-determining protein MinC.